The following is a 344-amino-acid chain: MSNAITMGIFWHLIGAASAACFYAPFKKVKKWSWETMWSVGGIVSWIILPWAISALLLPNFWAYYSSFSLSTLLPVFLFGAMCGIGNINYGLTMRYLGMSMGIGIAIGITLIVGTLMTPIINGNFDVLISTEGGRMTLLGVLVALIGVGIVTRAGQLKERKMGIKAEEFNLKKGLVLAVMCGIFSAGMSFAMNAAKPMHEAAAALGVDPLYVALPSYVVIMGGGAIINLGFCFIRLAKVKDLSLKADFSLAKSLIIHNVLLSTLGGLMWYLQFFFYAWGHARIPAQYDYISWMLHMSFYVLCGGIVGLVLKEWNNAGRRPVTVLSLGCVVIIVAANIVGIGMAN.

The next 10 helical transmembrane spans lie at 4–24, 38–58, 68–88, 101–121, 137–157, 175–195, 214–234, 259–279, 290–310, and 323–343; these read AITM…CFYA, WSVG…ALLL, FSLS…IGNI, MGIG…TPII, TLLG…AGQL, LVLA…MNAA, LPSY…FCFI, VLLS…YAWG, ISWM…GLVL, and VLSL…IGMA.

The protein belongs to the L-rhamnose transporter (TC 2.A.7.6) family.

The protein resides in the cell inner membrane. The catalysed reaction is L-rhamnopyranose(in) + H(+)(in) = L-rhamnopyranose(out) + H(+)(out). Functionally, uptake of L-rhamnose across the cytoplasmic membrane with the concomitant transport of protons into the cell (symport system). This Escherichia coli O9:H4 (strain HS) protein is L-rhamnose-proton symporter.